The sequence spans 99 residues: PE-PGRS family protein PE25 (99 aa).

One can recognise a PE domain in the interval 1–92 (MSFVITNPEA…GADKYATAEA (92 aa)). At Ser-2 the chain carries N-acetylserine.

Belongs to the mycobacterial PE family. As to quaternary structure, forms a heterodimer with PPE41. The dimer forms a 1:1:1 heterotrimeric complex with EspG5. Interacts with PPE51.

The protein resides in the secreted. Functionally, the PE25/PPE41 dimer induces both a strong humoral and cellular immune response. PE25 protein alone induces low response. The dimer induces necrosis, but not apoptosis, in mouse macrophage cells. It also induces activation and maturation of mouse dendritic cells and drives Th2-biased immune responses. This chain is PE-PGRS family protein PE25, found in Mycobacterium tuberculosis (strain ATCC 25618 / H37Rv).